Consider the following 284-residue polypeptide: Plastid-lipid-associated protein 6, chloroplastic (284 aa).

Residues 1-11 are compositionally biased toward low complexity; it reads MATSSTFSSLL. Residues 1–47 are disordered; it reads MATSSTFSSLLPSPPALLSDHRSPPPSIRYSFSPLTTPKSSRLGFTV. The N-terminal 72 residues, 1–72, are a transit peptide targeting the chloroplast; sequence MATSSTFSSL…SIGGESDPPP (72 aa). Ser96, Ser105, Ser148, Ser151, and Ser155 each carry phosphoserine.

Belongs to the PAP/fibrillin family. In terms of assembly, part of the Photosystem II light-harvesting complex (LHCII). In terms of processing, phosphorylated as part of a basal defense response.

The protein resides in the plastid. It localises to the chloroplast. It is found in the plastoglobule. In terms of biological role, required for plastoglobule development and resistance to multiple stresses. Regulates plastoglobule osmiophilic content. May be involved in the transport of lipophilic antioxidants in and out of the plastoglobule. The chain is Plastid-lipid-associated protein 6, chloroplastic from Arabidopsis thaliana (Mouse-ear cress).